The primary structure comprises 131 residues: Small ribosomal subunit protein uS8 (131 aa).

The protein belongs to the universal ribosomal protein uS8 family. Part of the 30S ribosomal subunit. Contacts proteins S5 and S12.

In terms of biological role, one of the primary rRNA binding proteins, it binds directly to 16S rRNA central domain where it helps coordinate assembly of the platform of the 30S subunit. The chain is Small ribosomal subunit protein uS8 from Hamiltonella defensa subsp. Acyrthosiphon pisum (strain 5AT).